The following is a 273-amino-acid chain: Formamidopyrimidine-DNA glycosylase (273 aa).

Catalysis depends on Pro-2, which acts as the Schiff-base intermediate with DNA. Glu-3 (proton donor) is an active-site residue. The Proton donor; for beta-elimination activity role is filled by Lys-58. Residues His-91, Arg-110, and Arg-153 each contribute to the DNA site. Residues 238 to 272 form an FPG-type zinc finger; sequence KVYGKEGQPCPRCGEDFVKIKISGRGTTYCLHCQK. Catalysis depends on Arg-262, which acts as the Proton donor; for delta-elimination activity.

Belongs to the FPG family. In terms of assembly, monomer. Requires Zn(2+) as cofactor.

It catalyses the reaction Hydrolysis of DNA containing ring-opened 7-methylguanine residues, releasing 2,6-diamino-4-hydroxy-5-(N-methyl)formamidopyrimidine.. The enzyme catalyses 2'-deoxyribonucleotide-(2'-deoxyribose 5'-phosphate)-2'-deoxyribonucleotide-DNA = a 3'-end 2'-deoxyribonucleotide-(2,3-dehydro-2,3-deoxyribose 5'-phosphate)-DNA + a 5'-end 5'-phospho-2'-deoxyribonucleoside-DNA + H(+). Its function is as follows. Involved in base excision repair of DNA damaged by oxidation or by mutagenic agents. Acts as a DNA glycosylase that recognizes and removes damaged bases. Has a preference for oxidized purines, such as 7,8-dihydro-8-oxoguanine (8-oxoG). Has AP (apurinic/apyrimidinic) lyase activity and introduces nicks in the DNA strand. Cleaves the DNA backbone by beta-delta elimination to generate a single-strand break at the site of the removed base with both 3'- and 5'-phosphates. The polypeptide is Formamidopyrimidine-DNA glycosylase (Lactobacillus delbrueckii subsp. bulgaricus (strain ATCC 11842 / DSM 20081 / BCRC 10696 / JCM 1002 / NBRC 13953 / NCIMB 11778 / NCTC 12712 / WDCM 00102 / Lb 14)).